Consider the following 60-residue polypeptide: MESMKMKLIVVLMVAIVAFSAVGNVAAQTEAPAPSPTSDAAMFVPALFASVAALASGFLF.

The signal sequence occupies residues 1-27 (MESMKMKLIVVLMVAIVAFSAVGNVAA). Q28 bears the Pyrrolidone carboxylic acid mark. Residues P32, P34, and P36 each carry the 4-hydroxyproline modification. 3 O-linked (Ara...) hydroxyproline glycosylation sites follow: P32, P34, and P36. S38 carries GPI-anchor amidated serine lipidation. Positions 39–60 (DAAMFVPALFASVAALASGFLF) are cleaved as a propeptide — removed in mature form.

The protein belongs to the AG-peptide AGP family. Contains 4-hydroxyproline; hydroxylated on Pro-32, Pro-34 and Pro-36. In terms of processing, O-glycosylated on hydroxyprolines; noncontiguous hydroxylproline residues are glycosylated with arabinogalactan. In terms of tissue distribution, expressed in reproductive tissues. Expressed in chalaza, funiculus, stigma, septum, style and transmitting tract.

The protein resides in the cell membrane. Functionally, proteoglycan that seems to be implicated in diverse developmental roles such as differentiation, cell-cell recognition, embryogenesis and programmed cell death. The polypeptide is Arabinogalactan protein 12 (Arabidopsis thaliana (Mouse-ear cress)).